Reading from the N-terminus, the 392-residue chain is MSAQAQMRAMLDQLMGTSRDGDTTRQRIKFSDDRVCKSHLLNCCPHDVLSGTRMDLGECLKVHDLALRADYEIASKEQDFFFELDAMDHLQSFIADCDRRTEVSKKRLAETQEEISAEVAAKAERVHELNEEIGKLLAKVEQLGAEGNVEESQKVMDEVEKARAKKREAEEVYRNSMPASSFQQQKLRVCEVCSAYLGLHDNDRRLADHFGGKLHLGFIEIREKLEELKRVVAEKQEKRNQERLKRREEREREEREKLRRSRSHSKNPKRSRSREHRRHRSRSMSRERKRRTRSKSREKRHRHRSRSSSRSRSRSHQRSRHSSRDRSRERSKRRSSKERFRDQDLASRDRDRSSRDRSPRDRDRKDKKRSYESANGRSEDRRSSEEREAGEI.

The residue at position 18 (Ser-18) is a Phosphoserine. The stretch at 102 to 177 (EVSKKRLAET…EAEEVYRNSM (76 aa)) forms a coiled coil. A compositionally biased stretch (basic and acidic residues) spans 235 to 257 (KQEKRNQERLKRREEREREEREK). The disordered stretch occupies residues 235–392 (KQEKRNQERL…SSEEREAGEI (158 aa)). The segment covering 258–321 (LRRSRSHSKN…RSRSHQRSRH (64 aa)) has biased composition (basic residues). Lys-266 and Lys-269 each carry 5-hydroxylysine; by JMJD6. Composition is skewed to basic and acidic residues over residues 337–364 (KERF…DRDR) and 377–392 (RSED…AGEI).

It belongs to the Luc7 family. In terms of assembly, interacts with SCNM1. All isoforms are expressed in brain, kidney, heart, thymus, stomach, skeletal muscle, testis and spinal cord.

It is found in the nucleus speckle. It localises to the nucleus. The protein resides in the nucleoplasm. May bind to RNA via its Arg/Ser-rich domain. This chain is Putative RNA-binding protein Luc7-like 2 (Luc7l2), found in Mus musculus (Mouse).